Reading from the N-terminus, the 423-residue chain is Imidazolonepropionase (423 aa).

The Fe(3+) site is built by His78 and His80. His78 and His80 together coordinate Zn(2+). 4-imidazolone-5-propanoate is bound by residues Arg87, Tyr150, and His183. Tyr150 is a binding site for N-formimidoyl-L-glutamate. His247 contributes to the Fe(3+) binding site. Residue His247 participates in Zn(2+) binding. Glu250 lines the 4-imidazolone-5-propanoate pocket. A Fe(3+)-binding site is contributed by Asp322. Asp322 serves as a coordination point for Zn(2+). Asn324 and Gly326 together coordinate N-formimidoyl-L-glutamate. Ser327 lines the 4-imidazolone-5-propanoate pocket.

This sequence belongs to the metallo-dependent hydrolases superfamily. HutI family. The cofactor is Zn(2+). Fe(3+) is required as a cofactor.

The protein resides in the cytoplasm. It carries out the reaction 4-imidazolone-5-propanoate + H2O = N-formimidoyl-L-glutamate. It functions in the pathway amino-acid degradation; L-histidine degradation into L-glutamate; N-formimidoyl-L-glutamate from L-histidine: step 3/3. Its function is as follows. Catalyzes the hydrolytic cleavage of the carbon-nitrogen bond in imidazolone-5-propanoate to yield N-formimidoyl-L-glutamate. It is the third step in the universal histidine degradation pathway. The protein is Imidazolonepropionase of Bacillus anthracis (strain A0248).